We begin with the raw amino-acid sequence, 1105 residues long: MTVTKPRSVQSRHISRYDWVPAAAGWAVGVIATLSLLASISPLVRWIIKVPREFINSYLFNFPDTSFAWSFVLALLAAALAARKRIAWLLLLTNVVLAAFLNAADIAAGGNTAAQNFGENLGFEVHVVAIVVLVLGYRQFWTKVRRGALFKAAAVLVAGGAIGILVSWGLVDLFPGSLAPHDRLPYVANRVIGFALADPDLFTGRPHVFLNAMFGLFGALALIAATIVLFQSQRADNALTGEDESAIRGLLELYGNSDSLGYFATRRDKSVIFASSGRAAITYRVEIGVCLASGDPVGDPRSWQQAIDAWLRLCQTYGWSPGVMGASSQGAKAYREAGLNALELGDEAILVPADFTLSGPDMRGVRQAVTRARRAGLTVRIRRHRDISGAEMEQTIDRADGWRDTESERGFSMALGRLGDPADTDCLLVEALDPDDLVVAMLSLVPWGTSGVSLDLMRRSPQSPNGTIELMVSELALRAEGLGISRISLNFAMFRSAFEQGAQLGAGPVARLWRWLLVFFSRWWQIETLYRSNQKYQPQWVPRYACYEDARVIPKVGVASVIAEGFLVLPFSRRNKVHTGHHPAVPERLAATGLLHHDGSAPDVSGLRQSAIADGDDPQRRLPEQVRVRLNKLKKLRSSGIDAYPVGEPPTHTVAQAMDADDQASVSVSGRILRVRNYGGVLFAHLRDWSGEIQVLLDNSRLGQGRAADFNAAIDLGDLVEMTGQMGSSKTGTRSLIVRRWRLIGKCLRPLPNKWNGLTDPEARVRTRYVDLAVNAESRTLITARSAVLRSVRETLSAKGFIEVETPILQQVHGGATARPFITHINTYSMDLFLRIAPELYLKRLCVGGVERVFELGRAFRNEGVDFSHNPEFTLLEAYQAHADYRVWIDSCRELIQNAAQAANGAPVAMRPAGGGRLEPVGISGVWAVKTVHDAVSEALGEQIDADTDLATLRRLADAARIPYRAQWDAGAVVLELYEHLVESRTEQPTFYLDFPTSVSPLTRPHRSKPGIAERWDLVAWGVELGTAYSELTDPVEQRLRLEEQSLLAAGGDPEAMQLDEDFLQAMEYAMPPTGGLGMGVDRVVMLITGRSIRETLPFPLAKPH.

The tract at residues 1 to 603 (MTVTKPRSVQ…LLHHDGSAPD (603 aa)) is phosphatidylglycerol lysyltransferase. The next 7 membrane-spanning stretches (helical) occupy residues 20 to 40 (VPAA…LASI), 62 to 82 (FPDT…ALAA), 86 to 106 (IAWL…AADI), 117 to 137 (FGEN…VLGY), 154 to 174 (AVLV…VDLF), 186 to 203 (YVAN…DLFT), and 208 to 228 (VFLN…ATIV). Positions 604 to 1105 (VSGLRQSAIA…TLPFPLAKPH (502 aa)) are lysine--tRNA ligase. Mg(2+) is bound by residues D1017 and E1024.

It in the N-terminal section; belongs to the LPG synthetase family. The protein in the C-terminal section; belongs to the class-II aminoacyl-tRNA synthetase family. The cofactor is Mg(2+).

It is found in the cell membrane. The enzyme catalyses tRNA(Lys) + L-lysine + ATP = L-lysyl-tRNA(Lys) + AMP + diphosphate. It catalyses the reaction L-lysyl-tRNA(Lys) + a 1,2-diacyl-sn-glycero-3-phospho-(1'-sn-glycerol) = a 1,2-diacyl-sn-glycero-3-phospho-1'-(3'-O-L-lysyl)-sn-glycerol + tRNA(Lys). Its function is as follows. Catalyzes the production of L-lysyl-tRNA(Lys)transfer and the transfer of a lysyl group from L-lysyl-tRNA(Lys) to membrane-bound phosphatidylglycerol (PG), which produces lysylphosphatidylglycerol (LPG), one of the components of the bacterial membrane with a positive net charge. LPG synthesis contributes to the resistance to cationic antimicrobial peptides (CAMPs) and likely protects M.tuberculosis against the CAMPs produced by competiting microorganisms (bacteriocins). In fact, the modification of anionic phosphatidylglycerol with positively charged L-lysine results in repulsion of the peptides. The chain is Lysylphosphatidylglycerol biosynthesis bifunctional protein LysX (lysX) from Mycobacterium ulcerans (strain Agy99).